A 591-amino-acid chain; its full sequence is Proteasome-associated ATPase (591 aa).

Residues 10–77 (VAAAEELHAL…LREEVDRLGQ (68 aa)) adopt a coiled-coil conformation. 278–283 (GCGKTL) contributes to the ATP binding site. Residues 590–591 (YL) form a docks into pockets in the proteasome alpha-ring region.

Belongs to the AAA ATPase family. Homohexamer. Assembles into a hexameric ring structure that likely caps the 20S proteasome core. Can form a complex composed of two stacked hexameric rings in vitro. Probably interacts with the prokaryotic ubiquitin-like protein Pup through a hydrophobic interface; the expected interacting region of ARC lies in its N-terminal coiled-coil domain. There is likely one Pup binding site per ARC hexamer ring. Upon ATP-binding, the C-terminus of ARC probably interacts with the alpha-rings of the proteasome core, possibly by binding to the intersubunit pockets.

It participates in protein degradation; proteasomal Pup-dependent pathway. With respect to regulation, ATPase activity is inhibited by N-ethylmaleimide (NEM) but not by sodium azide. In terms of biological role, ATPase which is responsible for recognizing, binding, unfolding and translocation of pupylated proteins into the bacterial 20S proteasome core particle. May be essential for opening the gate of the 20S proteasome via an interaction with its C-terminus, thereby allowing substrate entry and access to the site of proteolysis. Thus, the C-termini of the proteasomal ATPase may function like a 'key in a lock' to induce gate opening and therefore regulate proteolysis. This is Proteasome-associated ATPase from Rhodococcus erythropolis (Arthrobacter picolinophilus).